The primary structure comprises 156 residues: Crossover junction endodeoxyribonuclease RuvC (156 aa).

Residues Asp7, Glu66, and Asp138 contribute to the active site. Mg(2+) contacts are provided by Asp7, Glu66, and Asp138.

This sequence belongs to the RuvC family. As to quaternary structure, homodimer which binds Holliday junction (HJ) DNA. The HJ becomes 2-fold symmetrical on binding to RuvC with unstacked arms; it has a different conformation from HJ DNA in complex with RuvA. In the full resolvosome a probable DNA-RuvA(4)-RuvB(12)-RuvC(2) complex forms which resolves the HJ. It depends on Mg(2+) as a cofactor.

The protein localises to the cytoplasm. The enzyme catalyses Endonucleolytic cleavage at a junction such as a reciprocal single-stranded crossover between two homologous DNA duplexes (Holliday junction).. In terms of biological role, the RuvA-RuvB-RuvC complex processes Holliday junction (HJ) DNA during genetic recombination and DNA repair. Endonuclease that resolves HJ intermediates. Cleaves cruciform DNA by making single-stranded nicks across the HJ at symmetrical positions within the homologous arms, yielding a 5'-phosphate and a 3'-hydroxyl group; requires a central core of homology in the junction. The consensus cleavage sequence is 5'-(A/T)TT(C/G)-3'. Cleavage occurs on the 3'-side of the TT dinucleotide at the point of strand exchange. HJ branch migration catalyzed by RuvA-RuvB allows RuvC to scan DNA until it finds its consensus sequence, where it cleaves and resolves the cruciform DNA. The polypeptide is Crossover junction endodeoxyribonuclease RuvC (Ehrlichia chaffeensis (strain ATCC CRL-10679 / Arkansas)).